Reading from the N-terminus, the 719-residue chain is Protein borderless (719 aa).

A signal peptide spans 1–33; the sequence is MPAKRSRTFRQSGSALLALLAIILLMNISCTSA. The Extracellular segment spans residues 34–650; sequence ARDHRRQTNL…IDVPSQRKVR (617 aa). 4 Ig-like domains span residues 40–128, 134–241, 246–334, and 341–429; these read QTNL…CQVS, PSVR…AFLN, AKVI…PVIS, and PIFS…AELM. Cystine bridges form between cysteine 55-cysteine 125, cysteine 172-cysteine 224, cysteine 267-cysteine 318, and cysteine 363-cysteine 413. Fibronectin type-III domains follow at residues 434–527 and 555–646; these read APRA…TLPS and APWN…VPSQ. The chain crosses the membrane as a helical span at residues 651-671; sequence ALIIGSSVGVIFLLCALCAFL. Topologically, residues 672–719 are cytoplasmic; sequence YVKRSCLRHLFAKDSSASEDEDTAESGDCDSDEQDQRDRDSIKIRQST. A disordered region spans residues 685–719; the sequence is DSSASEDEDTAESGDCDSDEQDQRDRDSIKIRQST. Residues 688–704 show a composition bias toward acidic residues; the sequence is ASEDEDTAESGDCDSDE. The segment covering 705–719 has biased composition (basic and acidic residues); the sequence is QDQRDRDSIKIRQST.

Belongs to the immunoglobulin superfamily. In terms of assembly, interacts with tutl. In terms of tissue distribution, in the visual system, expressed in lamina and medulla (at protein level).

The protein localises to the cell membrane. It localises to the cell projection. The protein resides in the axon. Functionally, in the developing eye, has a role in axonal targeting of the R7 photoreceptor where it functions together with tutl. Probably mediates homotypic cell adhesion; the effect is inhibited by Lar. This is Protein borderless from Drosophila melanogaster (Fruit fly).